A 463-amino-acid chain; its full sequence is MELRLYDTLSREKRTFTPLDPSNVRMYVCGPTVYDFAHIGNARPVIVFDVLFRLLRHVYGEAHVKYVRNITDVDDKINDRAARDFPGLPLNEAIRKVTEQTEKQFHDDVDALGCLRPTVEPRATEHIGEMRDIIDRLIAGGFAYVAADHVLFSPQAMNAKDGVLPRYGALANRSLDEMIAGARVDVAPYKRDATDFVLWKPSKPGEPSWPSPGGIAVQGRPGWHIECSAMSWKHLGERFDIHGGGIDLVFPHHENEVAQSCCAFHTERMAETWMHNGFLQVEGEKMSKSLGNFVTIRELLATDKFGGKRWDGAVLRLAMLKTHYRSPIDWTVEALHEAEKAIYDWSEFTKDATPAPCDEVIDALADDLNTPKMIAELHGLRRVGKPAELLGALQLLGIGRVFRQTIEIDVNAQALIEARTAARARKDFKESDRIRDELAAMGVVLKDGKDADGKPVTTWEIAR.

Cys-29 is a binding site for Zn(2+). The 'HIGH' region motif lies at 31 to 41 (PTVYDFAHIGN). 3 residues coordinate Zn(2+): Cys-227, His-252, and Glu-256. The 'KMSKS' region motif lies at 285–289 (KMSKS). Lys-288 contributes to the ATP binding site.

The protein belongs to the class-I aminoacyl-tRNA synthetase family. As to quaternary structure, monomer. Zn(2+) serves as cofactor.

The protein localises to the cytoplasm. It catalyses the reaction tRNA(Cys) + L-cysteine + ATP = L-cysteinyl-tRNA(Cys) + AMP + diphosphate. The chain is Cysteine--tRNA ligase from Rhodopseudomonas palustris (strain BisA53).